A 341-amino-acid polypeptide reads, in one-letter code: HTH-type transcriptional repressor PurR (341 aa).

An HTH lacI-type domain is found at 2–56 (ATIKDVAKRANVSTTTVSHVINKTRFVAEETRNAVWAAIKELHYSPSAVARSLKV). Residues 4 to 23 (IKDVAKRANVSTTTVSHVIN) constitute a DNA-binding region (H-T-H motif). The DNA-binding element occupies 48–56 (SAVARSLKV). 5 residues coordinate hypoxanthine: Y73, R190, T192, F221, and D275.

As to quaternary structure, homodimer.

The protein operates within purine metabolism; purine nucleotide biosynthesis [regulation]. In terms of biological role, is the main repressor of the genes involved in the de novo synthesis of purine nucleotides, regulating purB, purC, purEK, purF, purHD, purL, purMN and guaBA expression. PurR is allosterically activated to bind its cognate DNA by binding the purine corepressors, hypoxanthine or guanine, thereby effecting transcription repression. In Salmonella typhi, this protein is HTH-type transcriptional repressor PurR.